A 164-amino-acid polypeptide reads, in one-letter code: Small ribosomal subunit protein uS5 (164 aa).

In terms of domain architecture, S5 DRBM spans Y9–I72.

This sequence belongs to the universal ribosomal protein uS5 family. As to quaternary structure, part of the 30S ribosomal subunit. Contacts proteins S4 and S8.

Functionally, with S4 and S12 plays an important role in translational accuracy. Located at the back of the 30S subunit body where it stabilizes the conformation of the head with respect to the body. The chain is Small ribosomal subunit protein uS5 from Fusobacterium nucleatum subsp. nucleatum (strain ATCC 25586 / DSM 15643 / BCRC 10681 / CIP 101130 / JCM 8532 / KCTC 2640 / LMG 13131 / VPI 4355).